A 361-amino-acid polypeptide reads, in one-letter code: Chorismate synthase (361 aa).

The NADP(+) site is built by R48 and R54. FMN is bound by residues 125 to 127, 238 to 239, G278, 293 to 297, and R319; these read RSS, NA, and KPTSS.

It belongs to the chorismate synthase family. As to quaternary structure, homotetramer. FMNH2 is required as a cofactor.

The enzyme catalyses 5-O-(1-carboxyvinyl)-3-phosphoshikimate = chorismate + phosphate. The protein operates within metabolic intermediate biosynthesis; chorismate biosynthesis; chorismate from D-erythrose 4-phosphate and phosphoenolpyruvate: step 7/7. In terms of biological role, catalyzes the anti-1,4-elimination of the C-3 phosphate and the C-6 proR hydrogen from 5-enolpyruvylshikimate-3-phosphate (EPSP) to yield chorismate, which is the branch point compound that serves as the starting substrate for the three terminal pathways of aromatic amino acid biosynthesis. This reaction introduces a second double bond into the aromatic ring system. This is Chorismate synthase from Yersinia pseudotuberculosis serotype O:1b (strain IP 31758).